We begin with the raw amino-acid sequence, 516 residues long: Squalene epoxidase 5 (516 aa).

2 consecutive transmembrane segments (helical) span residues 3–23 (FTNV…VFYV) and 45–65 (ATDV…YALA). FAD-binding positions include 55 to 56 (VG), 75 to 76 (ER), R83, F88, R156, V172, D335, and M348. A helical transmembrane segment spans residues 446–466 (LIYHLCAITLSSIGHLLSPFP).

The protein belongs to the squalene monooxygenase family. FAD is required as a cofactor. Expressed in seedlings, leaves, stems and inflorescences. Detected in siliques.

Its subcellular location is the membrane. The enzyme catalyses squalene + reduced [NADPH--hemoprotein reductase] + O2 = (S)-2,3-epoxysqualene + oxidized [NADPH--hemoprotein reductase] + H2O + H(+). It functions in the pathway terpene metabolism; lanosterol biosynthesis; lanosterol from farnesyl diphosphate: step 2/3. Catalyzes the stereospecific oxidation of squalene to (S)-2,3-epoxysqualene, and is considered to be a rate-limiting enzyme in steroid biosynthesis. The protein is Squalene epoxidase 5 (SQE5) of Arabidopsis thaliana (Mouse-ear cress).